Consider the following 74-residue polypeptide: Salivary glue protein Sgs-7 (74 aa).

An N-terminal signal peptide occupies residues 1-23 (MKLIAVTIIACILLIGFSDLALG).

The polypeptide is Salivary glue protein Sgs-7 (Sgs7) (Drosophila melanogaster (Fruit fly)).